The primary structure comprises 258 residues: Aquaglyceroporin (258 aa).

At methionine 1 to arginine 11 the chain is on the cytoplasmic side. Residues glutamate 12 to alanine 32 traverse the membrane as a helical segment. Residues asparagine 33–lysine 45 are Extracellular-facing. Residues leucine 46 to glycine 66 form a helical membrane-spanning segment. 3 residues coordinate glycerol: glycine 66, alanine 67, and asparagine 70. Residues alanine 67–lysine 87 are Cytoplasmic-facing. The chain crosses the membrane as a helical span at residues isoleucine 88–glycine 108. The Extracellular portion of the chain corresponds to leucine 109 to threonine 135. Serine 127 lines the glycerol pocket. The chain crosses the membrane as a helical span at residues glycine 136 to valine 156. At aspartate 157–serine 171 the chain is on the cytoplasmic side. The chain crosses the membrane as a helical span at residues valine 172–leucine 192. Positions 189, 190, 193, and 196 each coordinate glycerol. Residues asparagine 193 to asparagine 217 lie on the Extracellular side of the membrane. The helical transmembrane segment at phenylalanine 218–tyrosine 238 threads the bilayer. Residues aspartate 239–leucine 258 lie on the Cytoplasmic side of the membrane.

It belongs to the MIP/aquaporin (TC 1.A.8) family. In terms of assembly, homotetramer.

The protein localises to the cell membrane. It carries out the reaction H2O(in) = H2O(out). The enzyme catalyses glycerol(in) = glycerol(out). The catalysed reaction is urea(in) = urea(out). It catalyses the reaction NH4(+)(in) = NH4(+)(out). It carries out the reaction methylamine(out) = methylamine(in). The enzyme catalyses formamide(out) = formamide(in). Its function is as follows. Mediates water and glycerol transport across the cell membrane. Permeable to sugar alcohols of up to five carbons and urea. Permeable to ammonia, methylamine and formamide. The protein is Aquaglyceroporin of Plasmodium falciparum (isolate 3D7).